We begin with the raw amino-acid sequence, 316 residues long: Coproporphyrin III ferrochelatase (316 aa).

Residues Tyr13, Arg30, 46-47 (RY), Ser54, and Tyr125 each bind Fe-coproporphyrin III. Positions 183 and 264 each coordinate Fe(2+).

It belongs to the ferrochelatase family.

It is found in the cytoplasm. It catalyses the reaction Fe-coproporphyrin III + 2 H(+) = coproporphyrin III + Fe(2+). It participates in porphyrin-containing compound metabolism; protoheme biosynthesis. In terms of biological role, involved in coproporphyrin-dependent heme b biosynthesis. Catalyzes the insertion of ferrous iron into coproporphyrin III to form Fe-coproporphyrin III. The polypeptide is Coproporphyrin III ferrochelatase (Geobacillus thermodenitrificans (strain NG80-2)).